A 477-amino-acid polypeptide reads, in one-letter code: MAAPILRSFSWGRWSGTLNLSVLLPLGLRKAHSGAQGLLAAQKARGLFKDFFPETGTKIELPELFDRGTASFPQTIYCGFDPTADSLHVGHLLALLGLFHLQRAGHNVIALVGGATARLGDPSGRTKEREALETERVRANARALRLGLEALAANHQQLFTDGRSWGSFTVLDNSAWYQKQHLVDFLAAVGGHFRMGTLLSRQSVQLRLKSPEGMSLAEFFYQVLQAYDFYYLFQRYGCRVQLGGSDQLGNIMSGYEFINKLTGEDVFGITVPLITSTTGAKLGKSAGNAVWLNRDKTSPFELYQFFVRQPDDSVERYLKLFTFLPLPEIDHIMQLHVKEPERRGPQKRLAAEVTKLVHGREGLDSAKRCTQALYHSSIDALEVMSDQELKELFKEAPFSEFFLDPGTSVLDTCRKANAIPDGPRGYRMITEGGVSINHQQVTNPESVLIVGQHILKNGLSLLKIGKRNFYIIKWLQL.

The transit peptide at 1–16 (MAAPILRSFSWGRWSG) directs the protein to the mitochondrion. Position 77 (Tyr77) interacts with L-tyrosine. Residue Asp81 participates in ATP binding. Positions 82-91 (PTADSLHVGH) match the 'HIGH' region motif. Residues Asp121, Tyr221, Gln225, and Asp228 each contribute to the L-tyrosine site. 244 to 246 (GSD) contacts ATP. Residue Gln247 participates in L-tyrosine binding. ATP contacts are provided by Ile274 and Lys284. Residues 281-285 (KLGKS) carry the 'KMSKS' region motif. Residues Lys355 and Lys367 each carry the N6-acetyllysine modification.

This sequence belongs to the class-I aminoacyl-tRNA synthetase family. As to quaternary structure, homodimer.

Its subcellular location is the mitochondrion matrix. It carries out the reaction tRNA(Tyr) + L-tyrosine + ATP = L-tyrosyl-tRNA(Tyr) + AMP + diphosphate + H(+). In terms of biological role, catalyzes the attachment of tyrosine to tRNA(Tyr) in a two-step reaction: tyrosine is first activated by ATP to form Tyr-AMP and then transferred to the acceptor end of tRNA(Tyr). This chain is Tyrosine--tRNA ligase, mitochondrial (YARS2), found in Homo sapiens (Human).